Reading from the N-terminus, the 334-residue chain is MSRVRRVLCRACLALAAVLAVLLLLPLPLPLPLPLPRAPAPDPGRVPTGSLTLEVSRLQPDDVFIAVKTTRKNHGPRLRLLLRTWISRAPRQTFIFTDGDDPELQLLAGSQMINTNCSAVRTRQALCCKMSVEYDKFIESGRKWFCHVDDDNYVNPKSLLHLLSTFSSNQDIYLGRPSLDHPIEATERVQGGGTSNTVKFWFATGGAGFCLSRGLALKMSPWASLGSFMSTAERVRLPDDCTVGYIVEGLLGARLLHSPLFHSHLENLQKLPSGAVLQQVTLSYGGPENPHNVVNVAGSFSIRQDPTRFQSVHCLLYPDTHWCPMKNRGKEAFQ.

At 1–6 (MSRVRR) the chain is on the cytoplasmic side. Residues 7 to 29 (VLCRACLALAAVLAVLLLLPLPL) traverse the membrane as a helical; Signal-anchor for type II membrane protein segment. Over 30–334 (PLPLPLPRAP…MKNRGKEAFQ (305 aa)) the chain is Lumenal. R77 serves as a coordination point for substrate. The N-linked (GlcNAc...) asparagine glycan is linked to N116. 2 disulfides stabilise this stretch: C117–C128 and C146–C210. Residue D150 participates in substrate binding. Residue D151 coordinates Mn(2+). Residue D240 is part of the active site. Residue H264 coordinates Mn(2+). C314 and C323 are disulfide-bonded.

The protein belongs to the glycosyltransferase 31 family. Requires Mn(2+) as cofactor. Most abundantly expressed in adult brain. Expressed in most neurons of the brain but not in glial cells. Also detected to a lower extent in adult lung and kidney.

The protein resides in the golgi apparatus membrane. The catalysed reaction is 3-O-(alpha-L-fucosyl)-L-threonyl-[EGF-like domain protein] + UDP-N-acetyl-alpha-D-glucosamine = 3-O-(N-acetyl-beta-D-glucosaminyl-(1-&gt;3)-alpha-L-fucosyl)-L-threonyl-[EGF-like domain protein] + UDP + H(+). The enzyme catalyses 3-O-(alpha-L-fucosyl)-L-seryl-[EGF-like domain protein] + UDP-N-acetyl-alpha-D-glucosamine = 3-O-(N-acetyl-beta-D-glucosaminyl-(1-&gt;3)-alpha-L-fucosyl)-L-seryl-[EGF-like domain protein] + UDP + H(+). In terms of biological role, glycosyltransferase that initiates the elongation of O-linked fucose residues attached to EGF-like repeats in the extracellular domain of Notch molecules. Modulates NOTCH1 activity by modifying O-fucose residues at specific EGF-like domains resulting in enhancement of NOTCH1 activation by DLL1 and JAG1. Inhibits Notch signaling in postmitotic neurons of the brain. It may play a role in adult brain and in neurogenesis. It may play a role in limb development. The polypeptide is Beta-1,3-N-acetylglucosaminyltransferase radical fringe (Rattus norvegicus (Rat)).